The following is a 469-amino-acid chain: Cytosolic beta-glucosidase (469 aa).

Substrate-binding residues include Gln17, His120, and Asn164. Residue Glu165 is the Proton donor of the active site. Tyr309 is a binding site for substrate. Residue Glu373 is the Nucleophile of the active site. Substrate contacts are provided by residues Trp417 and 424–425; that span reads EW.

This sequence belongs to the glycosyl hydrolase 1 family. Klotho subfamily. The N-terminus is blocked. In terms of tissue distribution, present in hepatocytes (at protein level).

The protein localises to the cytoplasm. It localises to the cytosol. The enzyme catalyses Hydrolysis of terminal, non-reducing beta-D-glucosyl residues with release of beta-D-glucose.. It carries out the reaction a beta-D-glucosyl-(1&lt;-&gt;1')-N-acylsphing-4-enine + H2O = an N-acylsphing-4-enine + D-glucose. The catalysed reaction is a beta-D-galactosyl-(1&lt;-&gt;1')-N-acylsphing-4-enine + H2O = an N-acylsphing-4-enine + D-galactose. It catalyses the reaction beta-D-glucosyl-(1&lt;-&gt;1)-sphing-4-enine + H2O = sphing-4-enine + D-glucose. The enzyme catalyses beta-D-glucosyl-(1&lt;-&gt;1)-N-octadecanoylsphing-4-enine + H2O = N-octadecanoylsphing-4-enine + D-glucose. It carries out the reaction beta-D-galactosyl-(1&lt;-&gt;1)-sphing-4-enine + H2O = sphing-4-enine + D-galactose. The catalysed reaction is beta-D-galactosyl-(1&lt;-&gt;1')-N-octadecanoylsphing-4-enine + H2O = N-octadecanoylsphing-4-enine + D-galactose. It catalyses the reaction a beta-D-xylosyl-(1&lt;-&gt;1')-N-acylsphing-4-enine + cholesterol = cholesteryl 3-beta-D-xyloside + an N-acylsphing-4-enine. Its activity is regulated as follows. Inhibited by 2,4-dinitrophenyl-2-fluoro-2-deoxy-beta-D-glucopyranoside. In terms of biological role, neutral cytosolic beta-glycosidase with a broad substrate specificity that could play a role in the catabolism of glycosylceramides. Has a significant glucosylceramidase activity in vitro. However, that activity is relatively low and its significance in vivo is not clear. Hydrolyzes galactosylceramide/GalCer, glucosylsphingosine/GlcSph and galactosylsphingosine/GalSph. However, the in vivo relevance of these activities is unclear. It can also hydrolyze a broad variety of dietary glycosides including phytoestrogens, flavonols, flavones, flavanones and cyanogens in vitro and could therefore play a role in the metabolism of xenobiotics. Possesses transxylosylase activity in vitro using xylosylated ceramides/XylCers (such as beta-D-xylosyl-(1&lt;-&gt;1')-N-acylsphing-4-enine) as xylosyl donors and cholesterol as acceptor. Could also play a role in the catabolism of cytosolic sialyl free N-glycans. The protein is Cytosolic beta-glucosidase of Cavia porcellus (Guinea pig).